The chain runs to 340 residues: DnaJ homolog subfamily B member 1 (340 aa).

The J domain occupies 2 to 70 (GKDYYQTLGL…REIFDRYGEE (69 aa)). Thr-307 bears the Phosphothreonine mark.

In terms of assembly, interacts with DNAJC3. Interacts with HSF1 (via transactivation domain); this interaction results in the inhibition of heat shock- and HSF1-induced transcriptional activity during the attenuation and recovery phase period of the heat shock response. Interacts with BAG3.

The protein localises to the cytoplasm. The protein resides in the nucleus. It localises to the nucleolus. Functionally, interacts with HSP70 and can stimulate its ATPase activity. Stimulates the association between HSC70 and HIP. Negatively regulates heat shock-induced HSF1 transcriptional activity during the attenuation and recovery phase period of the heat shock response. Stimulates ATP hydrolysis and the folding of unfolded proteins mediated by HSPA1A/B (in vitro). This Mus musculus (Mouse) protein is DnaJ homolog subfamily B member 1 (Dnajb1).